A 395-amino-acid polypeptide reads, in one-letter code: Elongation factor Tu (395 aa).

The tr-type G domain maps to 10 to 204 (KPHVNIGTIG…IVDEYIPTPE (195 aa)). The tract at residues 19–26 (GHVDHGKT) is G1. 19–26 (GHVDHGKT) provides a ligand contact to GTP. Threonine 26 is a binding site for Mg(2+). The interval 60–64 (GITIN) is G2. Residues 81 to 84 (DAPG) form a G3 region. Residues 81–85 (DAPGH) and 136–139 (NKAD) contribute to the GTP site. Positions 136–139 (NKAD) are G4. Residues 174 to 176 (SAL) form a G5 region.

Belongs to the TRAFAC class translation factor GTPase superfamily. Classic translation factor GTPase family. EF-Tu/EF-1A subfamily. In terms of assembly, monomer.

It localises to the cytoplasm. The enzyme catalyses GTP + H2O = GDP + phosphate + H(+). In terms of biological role, GTP hydrolase that promotes the GTP-dependent binding of aminoacyl-tRNA to the A-site of ribosomes during protein biosynthesis. This is Elongation factor Tu from Lactococcus lactis subsp. lactis (strain IL1403) (Streptococcus lactis).